The sequence spans 155 residues: D-aminoacyl-tRNA deacylase (155 aa).

The short motif at 137–138 is the Gly-cisPro motif, important for rejection of L-amino acids element; that stretch reads GP.

The protein belongs to the DTD family. Homodimer.

It is found in the cytoplasm. The catalysed reaction is glycyl-tRNA(Ala) + H2O = tRNA(Ala) + glycine + H(+). It catalyses the reaction a D-aminoacyl-tRNA + H2O = a tRNA + a D-alpha-amino acid + H(+). In terms of biological role, an aminoacyl-tRNA editing enzyme that deacylates mischarged D-aminoacyl-tRNAs. Also deacylates mischarged glycyl-tRNA(Ala), protecting cells against glycine mischarging by AlaRS. Acts via tRNA-based rather than protein-based catalysis; rejects L-amino acids rather than detecting D-amino acids in the active site. By recycling D-aminoacyl-tRNA to D-amino acids and free tRNA molecules, this enzyme counteracts the toxicity associated with the formation of D-aminoacyl-tRNA entities in vivo and helps enforce protein L-homochirality. In Nitrosococcus oceani (strain ATCC 19707 / BCRC 17464 / JCM 30415 / NCIMB 11848 / C-107), this protein is D-aminoacyl-tRNA deacylase.